Here is a 141-residue protein sequence, read N- to C-terminus: Large-conductance mechanosensitive channel (141 aa).

3 helical membrane-spanning segments follow: residues 16–36 (VIDL…VDSV), 40–60 (LIMP…MFIV), and 86–106 (GNFL…FLMV).

It belongs to the MscL family. As to quaternary structure, homopentamer.

The protein resides in the cell inner membrane. Channel that opens in response to stretch forces in the membrane lipid bilayer. May participate in the regulation of osmotic pressure changes within the cell. This chain is Large-conductance mechanosensitive channel, found in Cupriavidus necator (strain ATCC 17699 / DSM 428 / KCTC 22496 / NCIMB 10442 / H16 / Stanier 337) (Ralstonia eutropha).